A 116-amino-acid chain; its full sequence is U16-barytoxin-Tl1c (116 aa).

A signal peptide spans 1 to 20 (MKTIIVFLSLLVLATKFGDA). A propeptide spanning residues 21–76 (NEGVNQEQMKEVIQNEFREDFLNEMAPMSLLQQLEAIESTLLEKEADRNSRQKRCN) is cleaved from the precursor. Cystine bridges form between cysteine 75/cysteine 90, cysteine 82/cysteine 95, and cysteine 89/cysteine 110.

Belongs to the neurotoxin 14 (magi-1) family. 06 (ICK-Trit) subfamily. As to expression, expressed by the venom gland.

Its subcellular location is the secreted. Functionally, ion channel inhibitor. The protein is U16-barytoxin-Tl1c of Trittame loki (Brush-footed trapdoor spider).